The following is an 8525-amino-acid chain: Nebulin (8525 aa).

Residues 34 to 70 (TTTTRTSDYEQSETSKPALAQPALAQPASAKPVERRK) form a disordered region. Residues 48–64 (SKPALAQPALAQPASAK) show a composition bias toward low complexity. Nebulin repeat units follow at residues 83–110 (TPYI…KTKG), 112–146 (PYAS…VAKT), 156–181 (DIEH…DTKD), 182–216 (KYLL…ADKS), 217–251 (LFYP…EQQA), 252–286 (QFTP…NKIK), 296–321 (EVAN…NMKD), 323–357 (IYFM…KNKG), 362–396 (NVLP…KTKA), 403–431 (ETPK…KDIL), 433–467 (HYVG…EDRG), 501–535 (KFTQ…SEKF), 536–570 (KCHI…KSKA), 572–606 (KFDI…KNKG), 610–644 (GVLS…KTKA), 680–714 (HYVG…EDKG), 748–782 (KFTA…GEKF), 783–817 (KCHI…KSKA), 819–853 (KFDI…KSKG), 857–891 (GALS…KSKT), 892–918 (IYTA…VDYK), 923–957 (SYSY…SWMK), 968–986 (EMEK…KYRQ), 992–1026 (KFTS…EIIH), 1027–1061 (KYNL…DLSK), 1063–1097 (GYDL…KAKG), 1101–1135 (GFQS…KTKS), 1136–1166 (KYNT…HSLH), 1167–1201 (HYTY…NWMK), 1212–1230 (DVEK…KYRQ), 1236–1270 (KFTS…DVKH), 1271–1305 (KYTM…DLIA), 1307–1341 (GNNV…KSKG), 1345–1379 (GFRS…NTKT), 1380–1407 (SYHT…NYKQ), 1411–1445 (HYTY…SFLK), 1456–1474 (EVEK…KYRQ), 1480–1514 (KFTS…KLKH), 1515–1549 (KYTI…KTIA), 1551–1585 (GYDL…KAKG), 1589–1623 (GFLS…ASKT), 1624–1654 (KYHT…QSYH), 1655–1689 (HYTL…NWMK), 1697–1725 (ESLE…KLKF), 1730–1758 (DTME…KDKT), 1759–1793 (TIHV…EEKK), 1795–1829 (GYDL…QAKG), 1833–1867 (GFRS…KSKT), 1868–1894 (SFHT…ANYR), 1899–1933 (TYNM…DFMK), 1949–1962 (KKAM…KYRQ), 1968–2002 (KYST…ADKT), 2003–2037 (KVHI…ESKK), 2039–2073 (GYDL…KGKG), 2077–2111 (GFRS…NTKT), 2112–2138 (SYHT…TNYK), 2143–2177 (KYIL…EWYK), 2188–2206 (EVEK…KYRQ), 2212–2246 (QFKK…KDKT), 2247–2281 (KIHV…EALK), 2283–2317 (GYDL…KQLG), 2321–2355 (GFRS…KWKT), 2356–2382 (KFSS…VDYK), 2387–2421 (QWTC…WLRG), 2436–2449 (KRAS…KYRQ), 2455–2489 (KFTS…KDKT), 2490–2524 (QIHI…ELKR), 2526–2560 (GYDL…KQLG), 2564–2598 (GARN…KWKT), 2599–2625 (KFSS…VDYK), 2630–2664 (QWTC…WLKG), 2679–2692 (KRAT…VYRQ), 2698–2732 (KFSS…KDKT), 2733–2767 (TVHI…EAKR), 2769–2803 (GYDM…KQLG), 2807–2841 (GARA…KWKT), 2842–2868 (KFSS…VDYK), 2873–2907 (QWTC…WMRG), 2917–2935 (DVEK…IYRQ), 2941–2975 (KFTS…KDKT), 2976–3010 (QIHI…EAKK), 3012–3046 (GYDL…KQLG), 3050–3084 (GARN…KWKT), 3085–3111 (KFSS…VDYK), 3116–3150 (EWTC…WLRG), 3158–3178 (SMDV…IYRQ), 3184–3218 (KFTS…KDKT), 3219–3253 (QIHI…EAKK), 3255–3289 (GYDL…KQLG), 3293–3327 (GARN…KWKT), 3328–3354 (KFSS…VDYK), 3359–3393 (EWTC…WLRG), 3401–3421 (SMDV…IYRQ), 3427–3461 (KFTS…KDKT), 3462–3496 (QVHI…EAKK), 3498–3532 (GYDL…KQLG), 3536–3570 (GARA…KYKT), 3571–3597 (RYSS…VDYK), 3602–3636 (EWIC…WMKG), 3643–3664 (DSLE…IYRQ), 3670–3704 (KFTS…NDKK), 3705–3739 (TIHV…ESKK), 3741–3775 (GYDL…KQLG), 3779–3813 (GARN…KWKT), 3814–3840 (KFSS…IDYK), 3845–3879 (EWTC…WLRG), 3889–3907 (EVEK…KYRQ), 3913–3947 (KFTC…ADKT), 3948–3982 (SIHV…ESKM), 3984–4018 (DYDL…KQKG), 4022–4056 (GAQS…KWKT), 4057–4083 (KFSS…IDYR), 4088–4122 (EWTC…WLRG), 4132–4149 (EMNR…RLYR), 4156–4190 (SFTS…KDKS), 4191–4225 (NITI…DAKQ), 4227–4261 (GYDI…KQLG), 4265–4299 (GFRT…KSKG), 4300–4326 (IHNT…IDYR), 4331–4365 (QWTC…WLKG), 4375–4392 (EVMR…RLYR), 4399–4433 (KFTS…KEKA), 4434–4468 (NVNV…DVKM), 4470–4504 (GYDL…KQKG), 4508–4542 (GCRS…DHKA), 4543–4569 (KISI…VDYR), 4574–4608 (HWSC…WLRG), 4618–4635 (EMNR…RLYR), 4642–4676 (SFTS…KDKS), 4677–4711 (NITI…DTKQ), 4713–4747 (GYDI…KQLG), 4751–4785 (GFRT…KSKG), 4786–4812 (IHNT…IDYR), 4817–4851 (QWTC…WLKG), 4861–4878 (EVMR…RLYR), 4885–4919 (KFTS…KEKA), 4920–4954 (NVNV…DVKM), 4956–4990 (GYDL…KQKG), 4994–5028 (GCRS…DHKA), 5029–5055 (KISI…VDYR), 5060–5094 (HWSC…WLRG), 5104–5121 (EMNR…RLYR), 5128–5162 (SFTS…KDKS), 5163–5197 (NITI…DTKQ), 5199–5233 (GYDI…KQLG), 5237–5271 (GFRT…KSKG), 5272–5298 (IHNT…IDYR), 5303–5337 (QWTC…WLKG), 5347–5364 (EVMR…RLYR), 5371–5405 (KFTS…KEKA), 5406–5440 (NVNV…DVKM), 5442–5476 (GYDL…KQKG), 5480–5514 (GCRS…DHKA), 5515–5541 (KISI…VDYR), 5546–5580 (RWSC…WLRG), 5588–5607 (SPEV…SVYR), 5614–5648 (KYTS…KDKT), 5649–5683 (SIHI…EMKA), 5690–5718 (DAIP…KQKG), 5722–5756 (GTLT…KWKA), 5757–5783 (KIQS…MDYR), 5788–5822 (QWTC…WLRG), 5829–5853 (DSVS…TKIE), 5856–5890 (NFTP…ATKS), 5893–5924 (TLTE…RQKA), 5926–5960 (GYIL…KQKG), 5964–5998 (GVPT…KTKA), 5999–6025 (KINI…IDYR), 6030–6064 (QWMC…WLRG), 6071–6099 (DSVD…ENYP), 6100–6134 (NFRS…KAKG), 6135–6169 (KYTF…GTKA), 6171–6205 (GYTL…KQKG), 6209–6243 (AGKV…DTKA), 6244–6274 (NVHI…HYFH), 6275–6309 (QWTS…WLKG), 6316–6344 (DTPQ…ENLQ), 6345–6379 (NYNL…QIKD), 6380–6414 (KYTT…RVKA), 6416–6450 (SYIL…KFKA), 6458–6488 (VDDD…KNKM), 6489–6515 (KIHI…IDYR), 6532–6554 (HVRK…WLKG), 6561–6589 (DTPE…KTRN), 6590–6624 (DYKL…HSVR), 6626–6660 (KVAP…TLPT), 6661–6695 (GYRL…HTKA), 6697–6731 (GYTL…KLKD), 6732–6766 (KIHT…KMQG), 6767–6801 (HMIS…VLKG), 6808–6836 (DTPD…KMRD), 6837–6871 (KYKV…KQKS), 6872–6906 (IFTS…KERP), 6907–6941 (HHHA…KMKD), 6942–6976 (KYTP…KTKG), 6977–7011 (KYHT…SQLG), 7012–7046 (IWRS…WLKG), 7053–7081 (DTPD…RTKS), 7082–7110 (DFKY…YKSS), 7125–7151 (PDML…KSKD), 7152–7186 (KFTS…KAKP), 7188–7222 (GYTT…RNKS), 7223–7257 (NCTI…ANKA), 7258–7292 (HWKW…FLKG), 7297–7327 (VTDD…KERG), 7328–7362 (TCHA…KHLA), 7365–7399 (SYTT…KEKG), 7402–7433 (NYSI…DAKE), 7436–7470 (HYTT…KEGS), 7479–7505 (PDIE…KEKG), 7514–7542 (DSQL…KLHK), 7543–7577 (PVTD…KSKG), 7578–7612 (HYHT…KERG), 7619–7647 (ETPT…ESIK), 7650–7684 (NLTG…ESIR), 7687–7721 (GLTE…LEVK), 7731–7759 (ETPD…MEKA), 7760–7794 (NFTS…KSMS), 7795–7829 (YYET…NSKG), 7830–7864 (KITV…PGTA), 7867–7888 (KTPE…KYKE), 7892–7921 (QGTP…KENL), 7930–7957 (TPEI…KGIP), 7961–7988 (TPEM…KGTP), 7992–8013 (TPEM…YKEN), 8016–8045 (KGIP…KENL), 8054–8075 (TPEM…YKEN), 8078–8112 (KGTP…KGTP), 8116–8143 (TPEM…KGTP), 8147–8168 (TPEM…YKEN), 8171–8205 (KATA…KATP), 8209–8232 (TPEM…ENMR), 8233–8267 (KATP…KQIQ), 8269–8303 (KAAY…KHKG), and 8304–8330 (CFTP…INYR). The interaction with SVIL stretch occupies residues 8313-8468 (ITERVKKNMQ…SIPSHPSTAG (156 aa)). Disordered regions lie at residues 8385–8422 (QAQR…LSTY) and 8439–8463 (TTEL…IPSH). Positions 8405–8419 (GEEKSEHSEAPDHHL) are enriched in basic and acidic residues. Residues 8444–8459 (QQRSSSVATQQTTVSS) are compositionally biased toward low complexity. Positions 8466-8525 (TAGKIFRAMYDYMAADADEVSFKDGDAIINVQAIDEGWMYGTVQRTGRTGMLPANYVEAI) constitute an SH3 domain.

Monomer and homooligomer. Interacts with TTN/titin. Interacts with SVIL. Interacts (via nebulin repeats 160-164) with DES. Expressed in skeletal muscle (at protein level). Located in the thin filament of striated muscle.

Its subcellular location is the cytoplasm. It is found in the myofibril. It localises to the sarcomere. The protein resides in the cytoskeleton. This giant muscle protein may be involved in maintaining the structural integrity of sarcomeres and the membrane system associated with the myofibrils. Binds and stabilize F-actin. The protein is Nebulin (NEB) of Homo sapiens (Human).